A 342-amino-acid polypeptide reads, in one-letter code: MTTLTITRPDDWHLHLRDGDVLTDTVRDSGRYNGRALIMPNLVPPVITTEQALSYRERIQAVNSSNTFAPIMSLYLTEKTTSDEIRKAKATGYIVAAKLYPAGATTNSDSGVSDVQKVYPILKTMQEEGMLLLIHGEVTTHDIDIFDREKTFLDTVLAPIVNDFPELKIVLEHITTKDAADFVKNAGPNVAATITAHHLLFNRNHMLVGGIKPHFYCLPILKRNTHQLALIEAATSGSPKFFLGTDSAPHSKEKKEAACGCAGSYTAHASIELYTEVFENEGKLDNLEAFASFNGPDFYNLPRNTDTITLVKEAWITPETMSFGNDVVVPIRAGEAVEWLVK.

Zn(2+) is bound by residues His-13 and His-15. Substrate is bound by residues 15-17 and Asn-41; that span reads HLR. Residues Lys-98, His-135, and His-173 each coordinate Zn(2+). Lys-98 bears the N6-carboxylysine mark. Residue His-135 coordinates substrate. Leu-218 lines the substrate pocket. Asp-246 lines the Zn(2+) pocket. The active site involves Asp-246. 2 residues coordinate substrate: His-250 and Ala-262.

Belongs to the metallo-dependent hydrolases superfamily. DHOase family. Class II DHOase subfamily. In terms of assembly, homodimer. Zn(2+) is required as a cofactor.

The catalysed reaction is (S)-dihydroorotate + H2O = N-carbamoyl-L-aspartate + H(+). It functions in the pathway pyrimidine metabolism; UMP biosynthesis via de novo pathway; (S)-dihydroorotate from bicarbonate: step 3/3. Functionally, catalyzes the reversible cyclization of carbamoyl aspartate to dihydroorotate. In Aliivibrio salmonicida (strain LFI1238) (Vibrio salmonicida (strain LFI1238)), this protein is Dihydroorotase.